The sequence spans 196 residues: uncharacterized protein (196 aa).

The N-terminal stretch at 1–21 (MNGKQCFCFFLFHLFYTGLFA) is a signal peptide. Cys22 carries N-palmitoyl cysteine lipidation. Residue Cys22 is the site of S-diacylglycerol cysteine attachment.

The protein localises to the cell membrane. This is an uncharacterized protein from Treponema pallidum (strain Nichols).